The chain runs to 448 residues: Asparagine--tRNA ligase (448 aa).

The protein belongs to the class-II aminoacyl-tRNA synthetase family. Homodimer.

It localises to the cytoplasm. It catalyses the reaction tRNA(Asn) + L-asparagine + ATP = L-asparaginyl-tRNA(Asn) + AMP + diphosphate + H(+). This Streptococcus pyogenes serotype M2 (strain MGAS10270) protein is Asparagine--tRNA ligase.